Consider the following 271-residue polypeptide: Interleukin-1 alpha (271 aa).

Residues 1–112 (MAKVPDMFED…DSEEEIIKPR (112 aa)) constitute a propeptide that is removed on maturation. Lysine 82 is subject to N6-acetyllysine. The nuclear localization signal (NLS) stretch occupies residues 82–86 (KKRRL). Residue serine 87 is modified to Phosphoserine. Residues asparagine 102 and asparagine 141 are each glycosylated (N-linked (GlcNAc...) asparagine).

Belongs to the IL-1 family. As to quaternary structure, monomer. Interacts with TMED10; the interaction mediates the translocation from the cytoplasm into the ERGIC (endoplasmic reticulum-Golgi intermediate compartment) and thereby secretion. Interacts with IL1R1. Interacts with S100A13; this interaction is the first step in the export of IL1A, followed by direct translocation of this complex across the plasma membrane. In terms of processing, acetylated within its nuclear localization sequence, which impacts subcellular localization. Post-translationally, proteolytic processed by CAPN1 in a calcium-dependent manner. Cleavage from 31 kDa precursor to 18 kDa biologically active molecules. Phosphorylated. Phosphorylation greatly enhances susceptibility to digestion and promotes the conversion of pre-IL1A alpha to the biologically active IL1A.

The protein localises to the nucleus. The protein resides in the cytoplasm. It is found in the secreted. Functionally, cytokine constitutively present intracellularly in nearly all resting non-hematopoietic cells that plays an important role in inflammation and bridges the innate and adaptive immune systems. After binding to its receptor IL1R1 together with its accessory protein IL1RAP, forms the high affinity interleukin-1 receptor complex. Signaling involves the recruitment of adapter molecules such as MYD88, IRAK1 or IRAK4. In turn, mediates the activation of NF-kappa-B and the three MAPK pathways p38, p42/p44 and JNK pathways. Within the cell, acts as an alarmin and cell death results in its liberation in the extracellular space after disruption of the cell membrane to induce inflammation and alert the host to injury or damage. In addition to its role as a danger signal, which occurs when the cytokine is passively released by cell necrosis, directly senses DNA damage and acts as signal for genotoxic stress without loss of cell integrity. In Cercocebus atys (Sooty mangabey), this protein is Interleukin-1 alpha (IL1A).